A 349-amino-acid chain; its full sequence is Protein O-mannose kinase (349 aa).

The Cytoplasmic portion of the chain corresponds to 1–19 (MGQQHGARNGLTHRELPRG). Residues 20–42 (MGLLLAMALMNVVLYVCLDHLFI) form a helical; Signal-anchor for type II membrane protein membrane-spanning segment. At 43–349 (SPGRATEDPR…TVMSQTKEML (307 aa)) the chain is on the lumenal side. 3 N-linked (GlcNAc...) asparagine glycosylation sites follow: asparagine 66, asparagine 164, and asparagine 219. The 270-residue stretch at 80-349 (VRQLKLVGEG…TVMSQTKEML (270 aa)) folds into the Protein kinase domain.

This sequence belongs to the protein kinase superfamily. Ser/Thr protein kinase family. STKL subfamily.

The protein localises to the endoplasmic reticulum membrane. The enzyme catalyses 3-O-[beta-D-GalNAc-(1-&gt;3)-beta-D-GlcNAc-(1-&gt;4)-alpha-D-Man]-L-Thr-[protein] + ATP = 3-O-[beta-D-GalNAc-(1-&gt;3)-beta-D-GlcNAc-(1-&gt;4)-(O-6-P-alpha-D-Man)]-Thr-[protein] + ADP + H(+). Its function is as follows. Protein O-mannose kinase that specifically mediates phosphorylation at the 6-position of an O-mannose of the trisaccharide (N-acetylgalactosamine (GalNAc)-beta-1,3-N-acetylglucosamine (GlcNAc)-beta-1,4-mannose) to generate phosphorylated O-mannosyl trisaccharide (N-acetylgalactosamine-beta-1,3-N-acetylglucosamine-beta-1,4-(phosphate-6-)mannose). Phosphorylated O-mannosyl trisaccharide is a carbohydrate structure present in alpha-dystroglycan (DAG1), which is required for binding laminin G-like domain-containing extracellular proteins with high affinity. Only shows kinase activity when the GalNAc-beta-3-GlcNAc-beta-terminus is linked to the 4-position of O-mannose, suggesting that this disaccharide serves as the substrate recognition motif. This chain is Protein O-mannose kinase (Pomk), found in Rattus norvegicus (Rat).